A 403-amino-acid chain; its full sequence is Phosphopentomutase (403 aa).

Residues Asp13, Asp298, His303, Asp339, His340, and His351 each contribute to the Mn(2+) site.

Belongs to the phosphopentomutase family. Mn(2+) serves as cofactor.

It localises to the cytoplasm. The catalysed reaction is 2-deoxy-alpha-D-ribose 1-phosphate = 2-deoxy-D-ribose 5-phosphate. It carries out the reaction alpha-D-ribose 1-phosphate = D-ribose 5-phosphate. It functions in the pathway carbohydrate degradation; 2-deoxy-D-ribose 1-phosphate degradation; D-glyceraldehyde 3-phosphate and acetaldehyde from 2-deoxy-alpha-D-ribose 1-phosphate: step 1/2. Its function is as follows. Isomerase that catalyzes the conversion of deoxy-ribose 1-phosphate (dRib-1-P) and ribose 1-phosphate (Rib-1-P) to deoxy-ribose 5-phosphate (dRib-5-P) and ribose 5-phosphate (Rib-5-P), respectively. In Streptococcus suis (strain 05ZYH33), this protein is Phosphopentomutase.